We begin with the raw amino-acid sequence, 493 residues long: MITTQMWHFYVTRVGLLLLISILPGTTGQGESRRQEPGDFVKQDIGGLSPKHAPDIPDDSTDNITIFTRILDRLLDGYDNRLRPGLGDAVTEVKTDIYVTSFGPVSDTDMEYTIDVFFRQTWHDERLKFDGPMKILPLNNLLASKIWTPDTFFHNGKKSVAHNMTTPNKLLRLVDNGTLLYTMRLTIHAECPMHLEDFPMDVHACPLKFGSYAYTKAEVIYSWTLGKNKSVEVAQDGSRLNQYDLLGHVVGTEIIRSSTGEYVVMTTHFHLKRKIGYFVIQTYLPCIMTVILSQVSFWLNRESVPARTVFGVTTVLTMTTLSISARNSLPKVAYATAMDWFIAVCYAFVFSALIEFATVNYFTKRSWAWEGKKVPEALEMKKKTPAAPTKKTSTTFNIVGTTYPINLAKDTEFSTISKAAAAPSASSTPTVIASPKTTYVQDSPAETKTYNSVSKVDKISRIIFPVLFAIFNLVYWATYVNRESAIKGMIRKQ.

An N-terminal signal peptide occupies residues 1 to 28 (MITTQMWHFYVTRVGLLLLISILPGTTG). Residues 27–54 (TGQGESRRQEPGDFVKQDIGGLSPKHAP) form a disordered region. Over 29–276 (QGESRRQEPG…THFHLKRKIG (248 aa)) the chain is Extracellular. Positions 31 to 42 (ESRRQEPGDFVK) are enriched in basic and acidic residues. N-linked (GlcNAc...) asparagine glycosylation occurs at N63. R119 provides a ligand contact to 4-aminobutanoate. N-linked (GlcNAc...) asparagine glycosylation is found at N163 and N176. Position 182 (T182) interacts with 4-aminobutanoate. C191 and C205 are joined by a disulfide. An N-linked (GlcNAc...) asparagine glycan is attached at N228. A run of 3 helical transmembrane segments spans residues 277–298 (YFVI…VSFW), 304–325 (VPAR…SISA), and 338–359 (MDWF…FATV). The Cytoplasmic segment spans residues 360-458 (NYFTKRSWAW…TYNSVSKVDK (99 aa)). Residue S427 is modified to Phosphoserine. Phosphothreonine is present on T428. S434 and S443 each carry phosphoserine. A helical membrane pass occupies residues 459–480 (ISRIIFPVLFAIFNLVYWATYV).

This sequence belongs to the ligand-gated ion channel (TC 1.A.9) family. Gamma-aminobutyric acid receptor (TC 1.A.9.5) subfamily. GABRA3 sub-subfamily. Heteropentamer, formed by a combination of alpha (GABRA1-6), beta (GABRB1-3), gamma (GABRG1-3), delta (GABRD), epsilon (GABRE), rho (GABRR1-3), pi (GABRP) and theta (GABRQ) chains, each subunit exhibiting distinct physiological and pharmacological properties. Binds UBQLN1. Interacts with GPHN. In terms of tissue distribution, expressed in most brain regions. Expressed in lungs, in alveolar epithelium.

The protein resides in the postsynaptic cell membrane. The protein localises to the cell membrane. The catalysed reaction is chloride(in) = chloride(out). Its function is as follows. Alpha subunit of the heteropentameric ligand-gated chloride channel gated by gamma-aminobutyric acid (GABA), a major inhibitory neurotransmitter in the brain. GABA-gated chloride channels, also named GABA(A) receptors (GABAAR), consist of five subunits arranged around a central pore and contain GABA active binding site(s) located at the alpha and beta subunit interface(s). When activated by GABA, GABAARs selectively allow the flow of chloride anions across the cell membrane down their electrochemical gradient. Chloride influx into the postsynaptic neuron following GABAAR opening decreases the neuron ability to generate a new action potential, thereby reducing nerve transmission. The polypeptide is Gamma-aminobutyric acid receptor subunit alpha-3 (Rattus norvegicus (Rat)).